A 303-amino-acid polypeptide reads, in one-letter code: UPF0282 protein MM_2966 (303 aa).

The protein belongs to the UPF0282 family.

This Methanosarcina mazei (strain ATCC BAA-159 / DSM 3647 / Goe1 / Go1 / JCM 11833 / OCM 88) (Methanosarcina frisia) protein is UPF0282 protein MM_2966.